The chain runs to 189 residues: UPF0301 protein RAF_ORF0041 (189 aa).

This sequence belongs to the UPF0301 (AlgH) family.

This chain is UPF0301 protein RAF_ORF0041, found in Rickettsia africae (strain ESF-5).